The sequence spans 133 residues: Ribonuclease VapC10 (133 aa).

One can recognise a PINc domain in the interval 2–119; the sequence is ILVDSDVLIA…NVWHFPMFEQ (118 aa). Residues aspartate 5 and aspartate 92 each coordinate Mg(2+).

The protein belongs to the PINc/VapC protein family. It depends on Mg(2+) as a cofactor.

Toxic component of a type II toxin-antitoxin (TA) system. An RNase. The cognate antitoxin is VapB10. The protein is Ribonuclease VapC10 of Mycobacterium tuberculosis (strain CDC 1551 / Oshkosh).